A 205-amino-acid polypeptide reads, in one-letter code: LexA repressor (205 aa).

Residues 28-48 (IRDIMKHFNFKSPRAAHKHLI) constitute a DNA-binding region (H-T-H motif). Residues Ser-125 and Lys-163 each act as for autocatalytic cleavage activity in the active site.

The protein belongs to the peptidase S24 family. In terms of assembly, homodimer.

The enzyme catalyses Hydrolysis of Ala-|-Gly bond in repressor LexA.. Functionally, represses a number of genes involved in the response to DNA damage (SOS response), including recA and lexA. In the presence of single-stranded DNA, RecA interacts with LexA causing an autocatalytic cleavage which disrupts the DNA-binding part of LexA, leading to derepression of the SOS regulon and eventually DNA repair. The protein is LexA repressor of Petrotoga mobilis (strain DSM 10674 / SJ95).